Reading from the N-terminus, the 554-residue chain is Glutamine--tRNA ligase (554 aa).

A 'HIGH' region motif is present at residues 34–44; sequence PEPNGYLHIGH. Residues 35–37 and 41–47 contribute to the ATP site; these read EPN and HIGHAKS. Asp67 and Tyr212 together coordinate L-glutamine. ATP is bound by residues Thr231, 261-262, and 269-271; these read RL and MSK. The 'KMSKS' region signature appears at 268–272; it reads VMSKR. The segment at 317–324 is interaction with tRNA; sequence TKQDNTIE.

This sequence belongs to the class-I aminoacyl-tRNA synthetase family. In terms of assembly, monomer.

Its subcellular location is the cytoplasm. The enzyme catalyses tRNA(Gln) + L-glutamine + ATP = L-glutaminyl-tRNA(Gln) + AMP + diphosphate. The chain is Glutamine--tRNA ligase from Escherichia coli (strain 55989 / EAEC).